The primary structure comprises 161 residues: uncharacterized protein (161 aa).

This sequence belongs to the mimivirus L761/L899 family.

The protein localises to the virion. This is an uncharacterized protein from Acanthamoeba polyphaga (Amoeba).